Consider the following 533-residue polypeptide: Flavin-containing monooxygenase 5 (533 aa).

R5 carries the dimethylated arginine modification. FAD is bound by residues G10–S14, E33, and L41–W42. Residue S54 is modified to Phosphoserine. Position 56 is a phosphotyrosine (Y56). S58 bears the Phosphoserine mark. N62–T63 lines the FAD pocket. Residue S196–D199 participates in NADP(+) binding. Residue S280 is modified to Phosphoserine. Phosphothreonine is present on T284. S401 is modified (phosphoserine). Residues M510–M530 form a helical membrane-spanning segment.

It belongs to the FMO family. FAD is required as a cofactor. In terms of tissue distribution, expressed in liver.

It localises to the microsome membrane. The protein localises to the endoplasmic reticulum membrane. It catalyses the reaction N,N-dimethylaniline + NADPH + O2 + H(+) = N,N-dimethylaniline N-oxide + NADP(+) + H2O. It carries out the reaction NADPH + O2 + H(+) = H2O2 + NADP(+). The enzyme catalyses heptan-2-one + NADPH + O2 + H(+) = pentyl acetate + NADP(+) + H2O. The catalysed reaction is octan-3-one + NADPH + O2 + H(+) = pentyl propanoate + NADP(+) + H2O. It catalyses the reaction octan-3-one + NADPH + O2 + H(+) = ethyl hexanoate + NADP(+) + H2O. It carries out the reaction hexan-3-one + NADPH + O2 + H(+) = ethyl butanoate + NADP(+) + H2O. The enzyme catalyses hexan-3-one + NADPH + O2 + H(+) = propyl propanoate + NADP(+) + H2O. The catalysed reaction is heptan-4-one + NADPH + O2 + H(+) = propyl butanoate + NADP(+) + H2O. It catalyses the reaction (2E)-geranial + NADPH + O2 + H(+) = (1E)-2,6-dimethylhepta-1,5-dien-1-yl formate + NADP(+) + H2O. It carries out the reaction sulcatone + NADPH + O2 + H(+) = 4-methylpent-3-en-1-yl acetate + NADP(+) + H2O. Functionally, acts as a Baeyer-Villiger monooxygenase on a broad range of substrates. Catalyzes the insertion of an oxygen atom into a carbon-carbon bond adjacent to a carbonyl, which converts ketones to esters. Active on diverse carbonyl compounds, whereas soft nucleophiles are mostly non- or poorly reactive. In contrast with other forms of FMO it is non- or poorly active on 'classical' substrates such as drugs, pesticides, and dietary components containing soft nucleophilic heteroatoms. Able to oxidize drug molecules bearing a carbonyl group on an aliphatic chain, such as nabumetone and pentoxifylline. Also, in the absence of substrates, shows slow but yet significant NADPH oxidase activity. Acts as a positive modulator of cholesterol biosynthesis as well as glucose homeostasis, promoting metabolic aging via pleiotropic effects. The polypeptide is Flavin-containing monooxygenase 5 (FMO5) (Cavia porcellus (Guinea pig)).